Consider the following 371-residue polypeptide: Protein NDRG2 (371 aa).

The disordered stretch occupies residues 1–21; that stretch reads MAELQEVQITEEKPLLPGQTP. An N-acetylalanine modification is found at Ala2. Position 20 is a phosphothreonine (Thr20). Phosphoserine is present on residues Ser326 and Ser328. Phosphothreonine is present on Thr330. The residue at position 332 (Ser332) is a Phosphoserine. The residue at position 334 (Thr334) is a Phosphothreonine. Residues 334 to 371 are disordered; the sequence is TSAASVDGNRSRSRTLSQSSESGTLSSGPPGHTMEVSC. Phosphoserine occurs at positions 335, 338, and 344. Positions 347-361 are enriched in low complexity; sequence RTLSQSSESGTLSSG. A Phosphothreonine modification is found at Thr348. Phosphoserine occurs at positions 350, 352, 353, and 355. Thr357 is modified (phosphothreonine). Phosphoserine is present on Ser370.

It belongs to the NDRG family. In terms of assembly, interacts with CTNNB1. In terms of tissue distribution, highly expressed in brain, heart, skeletal muscle and salivary gland, and moderately in kidney and liver. Expressed in dendritic cells, but not in other blood cells. Expression levels are low in pancreatic and liver cancer tissues; absent in meningioma. Expressed in low-grade gliomas but present at low levels in glioblastoma. Isoform 1 and isoform 2 are present in brain neurons and up-regulated in Alzheimer disease (at protein level).

It localises to the cytoplasm. Its subcellular location is the perinuclear region. The protein localises to the cell projection. It is found in the growth cone. Functionally, contributes to the regulation of the Wnt signaling pathway. Down-regulates CTNNB1-mediated transcriptional activation of target genes, such as CCND1, and may thereby act as tumor suppressor. May be involved in dendritic cell and neuron differentiation. The protein is Protein NDRG2 (NDRG2) of Homo sapiens (Human).